The sequence spans 380 residues: Magnesium-protoporphyrin IX monomethyl ester [oxidative] cyclase 1 (380 aa).

The protein belongs to the AcsF family. Fe cation serves as cofactor.

It catalyses the reaction Mg-protoporphyrin IX 13-monomethyl ester + 3 NADPH + 3 O2 + 2 H(+) = 3,8-divinyl protochlorophyllide a + 3 NADP(+) + 5 H2O. Its pathway is porphyrin-containing compound metabolism; chlorophyll biosynthesis (light-independent). In terms of biological role, catalyzes the formation of the isocyclic ring in chlorophyll biosynthesis. Mediates the cyclase reaction, which results in the formation of divinylprotochlorophyllide (Pchlide) characteristic of all chlorophylls from magnesium-protoporphyrin IX 13-monomethyl ester (MgPMME). This chain is Magnesium-protoporphyrin IX monomethyl ester [oxidative] cyclase 1, found in Thermosynechococcus vestitus (strain NIES-2133 / IAM M-273 / BP-1).